The chain runs to 300 residues: MLSTMQTVGAVLMLSIVLVAGRKRHHCDSKYYELTPAHTMCLTDKPNAVAVPLTQETEHEILEMHNKIRADVTDAANMLKMEWDERLATVAQKWAMQCILGHDSGRRGEPDLPGSVGQNVAWSSGDLTFLGAVQMWADEIVDFQYGVWTDGTGHYIQQVFAGASRIGCGQSACGNNKYFVCNYYKGTMGDEPYQLGRPCSQCRSSCQHIRGSQGRWGSLCDCTNGPDACFNGGIFNINTCQCECSGIWGGADCQEKHCPNEDFDDMCRYPDALRRPQHWCQYDNFQSDCPILCGYCPNPN.

The first 21 residues, 1 to 21 (MLSTMQTVGAVLMLSIVLVAG), serve as a signal peptide directing secretion. A propeptide spanning residues 22 to 24 (RKR) is cleaved from the precursor. The SCP domain occupies 62–183 (LEMHNKIRAD…GNNKYFVCNY (122 aa)).

Post-translationally, contains 11 disulfide bonds. In terms of tissue distribution, expressed by the venom duct.

It localises to the secreted. Its function is as follows. Protease responsible for cleaving the conotoxins from their propeptide precursors. The target propeptide requires minimum four residues including a leucine N-terminal of the cleavage site for efficient substrate processing (example: Xaa-Xaa-Xaa-Leu-Asn-Lys-Arg-toxin). In Conus textile (Cloth-of-gold cone), this protein is Cysteine-rich venom protein.